The primary structure comprises 81 residues: UPF0180 protein YkuS (81 aa).

Belongs to the UPF0180 family.

In Bacillus subtilis (strain 168), this protein is UPF0180 protein YkuS (ykuS).